We begin with the raw amino-acid sequence, 477 residues long: MKVTLPEFERAGVMVVGDVMLDRYWYGPTSRISPEAPVPVVKVDTIEERPGGAANVAMNIASLGANSRLVGLTGIDDAARALSKTLADVNVKCDFVSVPTHPTITKLRVLSRNQQLIRLDFEEGFEGVDPLPLHERINQALGSIGALVLSDYAKGALASVQQMIQLARKAGVPVLIDPKGTDFERYRGATLLTPNLSEFEAVAGKCKSEEEIVERGMKLIADFEFSALLVTRSEQGMTLLQPGKAPLHMPTQAQEVYDVTGAGDTVIGVLAATLAAGNSLEEACYFANAAAGVVVGKLGTSTVSPIELENAVRGRADTGFGVMTEAELKQAVASARKRGEKVVMTNGVFDILHAGHVSYLANARKLGDRLIVAVNSDASTKRLKGETRPVNPLEQRMIVLGALESVDWVVSFDEDTPQRLIAGVLPDLLVKGGDYKPEEIAGSEEVWANGGEVLVLNFEDGCSTTNIIKKIQKDSDK.

Residues 1 to 318 (MKVTLPEFER…ENAVRGRADT (318 aa)) are ribokinase. 195–198 (NLSE) is an ATP binding site. Asp-264 is an active-site residue. The cytidylyltransferase stretch occupies residues 344–477 (MTNGVFDILH…IKKIQKDSDK (134 aa)).

The protein in the N-terminal section; belongs to the carbohydrate kinase PfkB family. This sequence in the C-terminal section; belongs to the cytidylyltransferase family. As to quaternary structure, homodimer.

It catalyses the reaction D-glycero-beta-D-manno-heptose 7-phosphate + ATP = D-glycero-beta-D-manno-heptose 1,7-bisphosphate + ADP + H(+). The enzyme catalyses D-glycero-beta-D-manno-heptose 1-phosphate + ATP + H(+) = ADP-D-glycero-beta-D-manno-heptose + diphosphate. Its pathway is nucleotide-sugar biosynthesis; ADP-L-glycero-beta-D-manno-heptose biosynthesis; ADP-L-glycero-beta-D-manno-heptose from D-glycero-beta-D-manno-heptose 7-phosphate: step 1/4. It participates in nucleotide-sugar biosynthesis; ADP-L-glycero-beta-D-manno-heptose biosynthesis; ADP-L-glycero-beta-D-manno-heptose from D-glycero-beta-D-manno-heptose 7-phosphate: step 3/4. Its function is as follows. Catalyzes the phosphorylation of D-glycero-D-manno-heptose 7-phosphate at the C-1 position to selectively form D-glycero-beta-D-manno-heptose-1,7-bisphosphate. In terms of biological role, catalyzes the ADP transfer from ATP to D-glycero-beta-D-manno-heptose 1-phosphate, yielding ADP-D-glycero-beta-D-manno-heptose. The sequence is that of Bifunctional protein HldE from Citrobacter koseri (strain ATCC BAA-895 / CDC 4225-83 / SGSC4696).